The sequence spans 332 residues: Tetraacyldisaccharide 4'-kinase (332 aa).

60-67 (TVGGTGKT) provides a ligand contact to ATP.

This sequence belongs to the LpxK family.

The enzyme catalyses a lipid A disaccharide + ATP = a lipid IVA + ADP + H(+). It participates in glycolipid biosynthesis; lipid IV(A) biosynthesis; lipid IV(A) from (3R)-3-hydroxytetradecanoyl-[acyl-carrier-protein] and UDP-N-acetyl-alpha-D-glucosamine: step 6/6. Its function is as follows. Transfers the gamma-phosphate of ATP to the 4'-position of a tetraacyldisaccharide 1-phosphate intermediate (termed DS-1-P) to form tetraacyldisaccharide 1,4'-bis-phosphate (lipid IVA). The chain is Tetraacyldisaccharide 4'-kinase from Pseudomonas paraeruginosa (strain DSM 24068 / PA7) (Pseudomonas aeruginosa (strain PA7)).